Here is a 100-residue protein sequence, read N- to C-terminus: U-myrmeciitoxin(01)-Mg7c (100 aa).

The N-terminal stretch at 1-17 (MKLSYLSLALAIILVLA) is a signal peptide. A propeptide spanning residues 18-50 (IVYSPHMEVKALADAEPDAIGFADAFGEADAEP) is cleaved from the precursor. A glycan (O-linked (GalNAc...) serine) is linked at S85. O-linked (GalNAc...) threonine glycosylation is found at T94 and T95.

It belongs to the formicidae venom precursor-01 superfamily. Glycosylation is critical to maintaining the aqueous solubility of this protein, but does not directly contribute to its activity. As to expression, expressed by the venom gland.

The protein localises to the secreted. The protein resides in the target cell membrane. Neurotoxin that triggers pain behavior and inflammation in mammals, and is paralytic and lethal to insects. Causes a time-dependent increase in cell leak current. May act by targeting membranes. In Myrmecia gulosa (Red bulldog ant), this protein is U-myrmeciitoxin(01)-Mg7c.